A 692-amino-acid chain; its full sequence is Sodium- and chloride-dependent glycine transporter 1 (692 aa).

Residues 1 to 34 (MIGGDTRAASAHPGMASAQGPVATPSPEQPFPGT) are disordered. At 1-94 (MIGGDTRAAS…TRGNWGNQIE (94 aa)) the chain is on the cytoplasmic side. Transmembrane regions (helical) follow at residues 95–115 (FVLTSVGYAVGLGNVWRFPYL), 122–142 (GAFMFPYFIMLIFCGIPLFFM), and 174–194 (VSTYIGIYYNVVICIAFYYFF). The Extracellular segment spans residues 195 to 271 (SSMTHVLPWA…LSDDIGNFGE (77 aa)). 9 consecutive transmembrane segments (helical) span residues 272-292 (VRLPLLGCLGVSWVVVFLCLI), 301-321 (VVYFTATFPYVVLTILFVRGV), 346-366 (VWGDAASQIFYSLGCAWGGLI), 393-413 (SVYAGFVIFSILGFMANHLGV), 436-456 (LLPISPLWSLLFFFMLILLGL), 492-512 (VAGFLLGIPLTSQAGIYWLLL), 516-536 (YAASFSLVVISCIMCVSIMYI), 556-576 (LFFQICWRFVSPAIIFFILIF), and 596-616 (VAIGFLMALSSVICIPLYALF). At 617–692 (QLCRTDGDTL…GSSRFQDSRI (76 aa)) the chain is on the cytoplasmic side. Thr657 is subject to Phosphothreonine. Phosphoserine occurs at positions 659 and 684. Residues 681 to 692 (SNGSSRFQDSRI) are essential for interaction with EXOC1.

Belongs to the sodium:neurotransmitter symporter (SNF) (TC 2.A.22) family. SLC6A9 subfamily. Interacts with EXOC1; interaction increases the transporter capacity of SLC6A9 probably by promoting its insertion into the cell membrane. Interacts with EXOC3 and EXOC4. In terms of tissue distribution, expressed in the brain (at protein level). At 11 dpc, expressed in the ventral part of the ventricular zone. At 15 dpc, also expressed in adjacent mantle tissue and the meninges. Strongly expressed in 12 dpc and 15 dpc liver. As to expression, expressed in the brain.

It is found in the cell membrane. The enzyme catalyses glycine(out) + chloride(out) + 2 Na(+)(out) = glycine(in) + chloride(in) + 2 Na(+)(in). In terms of biological role, sodium- and chloride-dependent glycine transporter which is essential for regulating glycine concentrations at inhibitory glycinergic synapses. Sodium- and chloride-dependent glycine transporter. The protein is Sodium- and chloride-dependent glycine transporter 1 (Slc6a9) of Mus musculus (Mouse).